A 218-amino-acid chain; its full sequence is 3-dehydroquinate dehydratase (218 aa).

Residues 29–31 (EFR) and arginine 56 contribute to the 3-dehydroquinate site. The Proton donor/acceptor role is filled by histidine 116. The active-site Schiff-base intermediate with substrate is the lysine 142. Residues arginine 180, serine 200, and glutamine 204 each contribute to the 3-dehydroquinate site.

This sequence belongs to the type-I 3-dehydroquinase family. Homodimer.

It catalyses the reaction 3-dehydroquinate = 3-dehydroshikimate + H2O. It functions in the pathway metabolic intermediate biosynthesis; chorismate biosynthesis; chorismate from D-erythrose 4-phosphate and phosphoenolpyruvate: step 3/7. In terms of biological role, involved in the third step of the chorismate pathway, which leads to the biosynthesis of aromatic amino acids. Catalyzes the cis-dehydration of 3-dehydroquinate (DHQ) and introduces the first double bond of the aromatic ring to yield 3-dehydroshikimate. The polypeptide is 3-dehydroquinate dehydratase (Methanococcus maripaludis (strain C7 / ATCC BAA-1331)).